A 389-amino-acid chain; its full sequence is Fructose-1,6-bisphosphate aldolase/phosphatase (389 aa).

Residue Asp17 is the Proton acceptor; for FBP phosphatase activity of the active site. Asp17, His24, Asp57, and Asp58 together coordinate Mg(2+). Beta-D-fructose 1,6-bisphosphate is bound at residue His24. Dihydroxyacetone phosphate is bound at residue His24. A beta-D-fructose 1,6-bisphosphate-binding site is contributed by Tyr95. Gln99 serves as a coordination point for Mg(2+). Residue 108–109 (GN) participates in beta-D-fructose 1,6-bisphosphate binding. Position 136 (Asp136) interacts with Mg(2+). Lys137 is a binding site for beta-D-fructose 1,6-bisphosphate. Position 137 (Lys137) interacts with dihydroxyacetone phosphate. Residue Tyr233 is the Proton donor/acceptor; for FBP aldolase activity of the active site. Mg(2+) contacts are provided by Lys236, Asp237, and Asp238. Lys236 acts as the Schiff-base intermediate with DHAP; for FBP aldolase activity in catalysis. Residues 246-247 (QS), Arg270, Asp291, and Tyr352 each bind beta-D-fructose 1,6-bisphosphate. Residues Arg270 and Asp291 each coordinate dihydroxyacetone phosphate.

The protein belongs to the FBP aldolase/phosphatase family. Homooctamer; dimer of tetramers. Mg(2+) serves as cofactor.

The enzyme catalyses beta-D-fructose 1,6-bisphosphate + H2O = beta-D-fructose 6-phosphate + phosphate. The catalysed reaction is beta-D-fructose 1,6-bisphosphate = D-glyceraldehyde 3-phosphate + dihydroxyacetone phosphate. It participates in carbohydrate biosynthesis; gluconeogenesis. Its function is as follows. Catalyzes two subsequent steps in gluconeogenesis: the aldol condensation of dihydroxyacetone phosphate (DHAP) and glyceraldehyde-3-phosphate (GA3P) to fructose-1,6-bisphosphate (FBP), and the dephosphorylation of FBP to fructose-6-phosphate (F6P). The chain is Fructose-1,6-bisphosphate aldolase/phosphatase from Methanocaldococcus jannaschii (strain ATCC 43067 / DSM 2661 / JAL-1 / JCM 10045 / NBRC 100440) (Methanococcus jannaschii).